A 592-amino-acid chain; its full sequence is Bifunctional purine biosynthesis protein ATIC (592 aa).

At methionine 1 the chain carries N-acetylmethionine. The MGS-like domain occupies 2–146; that stretch reads APGQLALFSV…KNHARVTVVC (145 aa). The IMP cyclohydrolase stretch occupies residues 2 to 198; that stretch reads APGQLALFSV…ISDYFRKQYS (197 aa). Residues 12–14, 34–37, 64–67, 101–102, and 125–126 each bind IMP; these read SDK, SGGT, RVKT, CN, and DI. Lysine 137 acts as the Proton donor/acceptor; for FAICAR cyclization activity in catalysis. Residue lysine 199 is modified to N6-acetyllysine. The segment at 199 to 592 is AICAR formyltransferase; it reads KGVSQMPLRY…AHTNLRLFHH (394 aa). 5-amino-1-(5-phospho-beta-D-ribosyl)imidazole-4-carboxamide contacts are provided by residues 207-208, histidine 267, glycine 316, aspartate 339, asparagine 431, and arginine 451; that span reads RY. Histidine 267 serves as the catalytic Proton acceptor; for AICAR formyltransferase activity. Isoleucine 452 is a binding site for (6R)-10-formyltetrahydrofolate. A 5-amino-1-(5-phospho-beta-D-ribosyl)imidazole-4-carboxamide-binding site is contributed by phenylalanine 541. Residues aspartate 546 and 565–566 contribute to the (6R)-10-formyltetrahydrofolate site; that span reads SA. Arginine 588 lines the 5-amino-1-(5-phospho-beta-D-ribosyl)imidazole-4-carboxamide pocket.

The protein belongs to the PurH family. As to quaternary structure, homodimer. Associates with internalized INSR complexes on Golgi/endosomal membranes. Interacts with INSR; ATIC together with PRKAA2/AMPK2 and HACD3/PTPLAD1 is proposed to be part of a signaling network regulating INSR autophosphorylation and endocytosis. In terms of tissue distribution, present in the heart, brain, placenta, lung, liver, skeletal muscle, kidney, pancreas.

It is found in the cytoplasm. The protein localises to the cytosol. The enzyme catalyses (6R)-10-formyltetrahydrofolate + 5-amino-1-(5-phospho-beta-D-ribosyl)imidazole-4-carboxamide = 5-formamido-1-(5-phospho-D-ribosyl)imidazole-4-carboxamide + (6S)-5,6,7,8-tetrahydrofolate. It carries out the reaction 10-formyldihydrofolate + 5-amino-1-(5-phospho-beta-D-ribosyl)imidazole-4-carboxamide = 5-formamido-1-(5-phospho-D-ribosyl)imidazole-4-carboxamide + 7,8-dihydrofolate. The catalysed reaction is IMP + H2O = 5-formamido-1-(5-phospho-D-ribosyl)imidazole-4-carboxamide. It catalyses the reaction 5-amino-1-(5-phospho-D-ribosyl)imidazole-4-thiocarboxamide + 10-formyldihydrofolate = 6-thio-IMP + 7,8-dihydrofolate + H2O. It participates in purine metabolism; IMP biosynthesis via de novo pathway; 5-formamido-1-(5-phospho-D-ribosyl)imidazole-4-carboxamide from 5-amino-1-(5-phospho-D-ribosyl)imidazole-4-carboxamide (10-formyl THF route): step 1/1. The protein operates within purine metabolism; IMP biosynthesis via de novo pathway; IMP from 5-formamido-1-(5-phospho-D-ribosyl)imidazole-4-carboxamide: step 1/1. AMP and XMP inhibit AICAR formyltransferase activity. AICAR formyltransferase activity is inhibited by N-(6-fluoro-1-oxo-1,2-dihydroisoquinolin-7-yl)-5- [(3R)-3-hydroxypyrrolidin-1-yl]thiophene-2-sulfonamide (LSN 3213128), which acts as a tumor suppression in cancer cell lines. Bifunctional enzyme that catalyzes the last two steps of purine biosynthesis. Acts as a transformylase that incorporates a formyl group to the AMP analog AICAR (5-amino-1-(5-phospho-beta-D-ribosyl)imidazole-4-carboxamide) to produce the intermediate formyl-AICAR (FAICAR). Can use both 10-formyldihydrofolate and 10-formyltetrahydrofolate as the formyl donor in this reaction. Also catalyzes the cyclization of FAICAR to inosine monophosphate (IMP). Is able to convert thio-AICAR to 6-mercaptopurine ribonucleotide, an inhibitor of purine biosynthesis used in the treatment of human leukemias. Promotes insulin receptor/INSR autophosphorylation and is involved in INSR internalization. This is Bifunctional purine biosynthesis protein ATIC from Homo sapiens (Human).